The sequence spans 487 residues: Protein nucleotidyltransferase YdiU (487 aa).

8 residues coordinate ATP: Gly90, Gly92, Arg93, Lys113, Asp125, Gly126, Arg176, and Arg183. Asp252 acts as the Proton acceptor in catalysis. The Mg(2+) site is built by Asn253 and Asp262. Asp262 contributes to the ATP binding site.

Belongs to the SELO family. It depends on Mg(2+) as a cofactor. Mn(2+) serves as cofactor.

The catalysed reaction is L-seryl-[protein] + ATP = 3-O-(5'-adenylyl)-L-seryl-[protein] + diphosphate. It catalyses the reaction L-threonyl-[protein] + ATP = 3-O-(5'-adenylyl)-L-threonyl-[protein] + diphosphate. The enzyme catalyses L-tyrosyl-[protein] + ATP = O-(5'-adenylyl)-L-tyrosyl-[protein] + diphosphate. It carries out the reaction L-histidyl-[protein] + UTP = N(tele)-(5'-uridylyl)-L-histidyl-[protein] + diphosphate. The catalysed reaction is L-seryl-[protein] + UTP = O-(5'-uridylyl)-L-seryl-[protein] + diphosphate. It catalyses the reaction L-tyrosyl-[protein] + UTP = O-(5'-uridylyl)-L-tyrosyl-[protein] + diphosphate. In terms of biological role, nucleotidyltransferase involved in the post-translational modification of proteins. It can catalyze the addition of adenosine monophosphate (AMP) or uridine monophosphate (UMP) to a protein, resulting in modifications known as AMPylation and UMPylation. This chain is Protein nucleotidyltransferase YdiU, found in Pseudomonas fluorescens (strain SBW25).